A 186-amino-acid chain; its full sequence is Thiol:disulfide interchange protein CycY (186 aa).

The signal sequence occupies residues 1-20; the sequence is MGRYTLALLPLIVFGGIAHG. The 136-residue stretch at 47-182 folds into the Thioredoxin domain; it reads DAEPAAARRA…LVPAMEKALG (136 aa). Cysteines 80 and 83 form a disulfide.

It belongs to the thioredoxin family. DsbE subfamily.

Its subcellular location is the periplasm. Functionally, required for disulfide bond formation in some periplasmic proteins. Also acts as a disulfide oxidoreductase in cytochromes c biogenesis. The cysteines of apocytochromes c must be in the reduced state for covalent linkage between the two moieties to occur. The protein is Thiol:disulfide interchange protein CycY (cycY) of Rhizobium leguminosarum bv. viciae.